A 321-amino-acid chain; its full sequence is Lipoyl synthase (321 aa).

Positions 68, 73, 79, 94, 98, 101, and 308 each coordinate [4Fe-4S] cluster. One can recognise a Radical SAM core domain in the interval 80-297 (FNHGTATFMI…KEQALAMGFT (218 aa)).

This sequence belongs to the radical SAM superfamily. Lipoyl synthase family. [4Fe-4S] cluster serves as cofactor.

It localises to the cytoplasm. The catalysed reaction is [[Fe-S] cluster scaffold protein carrying a second [4Fe-4S](2+) cluster] + N(6)-octanoyl-L-lysyl-[protein] + 2 oxidized [2Fe-2S]-[ferredoxin] + 2 S-adenosyl-L-methionine + 4 H(+) = [[Fe-S] cluster scaffold protein] + N(6)-[(R)-dihydrolipoyl]-L-lysyl-[protein] + 4 Fe(3+) + 2 hydrogen sulfide + 2 5'-deoxyadenosine + 2 L-methionine + 2 reduced [2Fe-2S]-[ferredoxin]. The protein operates within protein modification; protein lipoylation via endogenous pathway; protein N(6)-(lipoyl)lysine from octanoyl-[acyl-carrier-protein]: step 2/2. Its function is as follows. Catalyzes the radical-mediated insertion of two sulfur atoms into the C-6 and C-8 positions of the octanoyl moiety bound to the lipoyl domains of lipoate-dependent enzymes, thereby converting the octanoylated domains into lipoylated derivatives. The polypeptide is Lipoyl synthase (Proteus mirabilis (strain HI4320)).